A 120-amino-acid chain; its full sequence is Hydrogenase maturation factor HypA (120 aa).

Position 2 (His2) interacts with Ni(2+). Residues Cys73, His76, Cys89, and Cys92 each contribute to the Zn(2+) site.

Belongs to the HypA/HybF family.

Functionally, involved in the maturation of [NiFe] hydrogenases. Required for nickel insertion into the metal center of the hydrogenase. The polypeptide is Hydrogenase maturation factor HypA (Deinococcus radiodurans (strain ATCC 13939 / DSM 20539 / JCM 16871 / CCUG 27074 / LMG 4051 / NBRC 15346 / NCIMB 9279 / VKM B-1422 / R1)).